We begin with the raw amino-acid sequence, 406 residues long: Plasma serine protease inhibitor (406 aa).

Positions 1–19 (MQLFLLLCLVLLSPQGASL) are cleaved as a signal peptide. Positions 20-25 (HRHHPR) are cleaved as a propeptide — removed in mature form. A glycan (O-linked (GalNAc...) threonine) is linked at Thr39. Asn249, Asn262, and Asn338 each carry an N-linked (GlcNAc...) asparagine glycan.

It belongs to the serpin family. As to quaternary structure, forms protease inhibiting heterodimers in extracellular body fluids with serine proteases such as activated protein C/coagulation factor V/F5, acrosin/ACR, chymotrypsinogen B/CTRB1, prothrombin/F2, factor Xa/F10, factor XI/F11, kallikrein/KLKB1, tissue kallikrein, trypsin/PRSS1, prostate specific antigen/KLK3, tissue plasminogen activator/PLAT and urinary plasminogen activator/PLAU. Forms membrane-anchored serine proteases inhibiting heterodimers with TMPRSS7 and TMPRSS11E. Interacts with SEMG2. Post-translationally, N- and O-glycosylated. N-glycosylation consists of a mixture of sialylated bi- (including sialyl-Lewis X epitopes), tri- and tetra-antennary complex-type chains; affects the maximal heparin- and thrombomodulin-enhanced rates of thrombin inhibition. O-glycosylated with core 1 or possibly core 8 glycans. Further modified with 2 sialic acid residues. Proteolytically cleaved. Inhibition of proteases is accompanied by formation of a stable enzyme-inhibitor complex and by degradation of the serpin to lower molecular weight derivatives. Proteolytically cleaved at the N-terminus; inhibits slightly the heparin- and thrombomodulin-enhanced rates of thrombin inhibition. As to expression, predominantly expressed in the epithelium of seminal vesicles. Expressed in the proximal tubular epithelium of the kidney. Expressed in the superficial and more differentiated epidermal keratinocytes of the skin. Expressed in megakaryocytes and platelets. Expressed poorly in kidney tumor cells compared to non tumor kidney tissues. Expressed in spermatozoa. Present in very high concentration in seminal plasma. Present in high concentration in plasma, synovial and Graaf follicle fluids. Present in low concentration in breast milk and in amniotic fluids. Present in very low concentration in urine, cerebrospinal fluids, saliva and tears (at protein level). Strongly expressed in liver. Expressed in kidney, spleen, pancreas, skeletal muscle, heart, testes, ovary, interstitial Leydig cells, epididymal glands, seminal vesicles and prostate.

The protein localises to the secreted. Its subcellular location is the extracellular space. Its activity is regulated as follows. Its inhibitory activity is greatly enhanced in the presence of glycosaminoglycans, heparin, thrombomodulin and phospholipids vesicles. In terms of biological role, heparin-dependent serine protease inhibitor acting in body fluids and secretions. Inactivates serine proteases by binding irreversibly to their serine activation site. Involved in the regulation of intravascular and extravascular proteolytic activities. Plays hemostatic roles in the blood plasma. Acts as a procoagulant and pro-inflammatory factor by inhibiting the anticoagulant activated protein C factor as well as the generation of activated protein C factor by the thrombin/thrombomodulin complex. Acts as an anticoagulant factor by inhibiting blood coagulation factors like prothrombin, factor XI, factor Xa, plasma kallikrein and fibrinolytic enzymes such as tissue- and urinary-type plasminogen activators. In seminal plasma, inactivates several serine proteases implicated in the reproductive system. Inhibits the serpin acrosin; indirectly protects component of the male genital tract from being degraded by excessive released acrosin. Inhibits tissue- and urinary-type plasminogen activator, prostate-specific antigen and kallikrein activities; has a control on the sperm motility and fertilization. Inhibits the activated protein C-catalyzed degradation of SEMG1 and SEMG2; regulates the degradation of semenogelin during the process of transfer of spermatozoa from the male reproductive tract into the female tract. In urine, inhibits urinary-type plasminogen activator and kallikrein activities. Inactivates membrane-anchored serine proteases activities such as MPRSS7 and TMPRSS11E. Inhibits urinary-type plasminogen activator-dependent tumor cell invasion and metastasis. May also play a non-inhibitory role in seminal plasma and urine as a hydrophobic hormone carrier by its binding to retinoic acid. The protein is Plasma serine protease inhibitor (SERPINA5) of Homo sapiens (Human).